A 412-amino-acid polypeptide reads, in one-letter code: Transcription factor IIIA (412 aa).

The segment at 20-43 (YLCQYCGISRSKNYLITKHIQSHH) adopts a C2H2-type 1; degenerate zinc-finger fold. C2H2-type zinc fingers lie at residues 66-88 (HTCQ…MQSH), 94-118 (FTCY…LLTH), and 123-148 (FKCP…KKYH). The disordered stretch occupies residues 144–207 (VKKYHSNDNR…NGNGDSQPAE (64 aa)). Basic and acidic residues predominate over residues 148 to 188 (HSNDNRDKDNTGLGDGDKDNTCKGDDDKEKSGSGGCEKENE). A Glycyl lysine isopeptide (Lys-Gly) (interchain with G-Cter in ubiquitin) cross-link involves residue Lys-185. The C2H2-type 5 zinc-finger motif lies at 215-239 (VVCKEIGCGKAFKYPSQLQKHQDSH). The C2H2-type 6; degenerate zinc finger occupies 247–272 (AFCSEPGCMKYFTNEECLKSHIRSCH). The segment at 275-296 (INCEICGSKHLKKNIKRHLRTH) adopts a C2H2-type 7; degenerate zinc-finger fold. The C2H2-type 8 zinc-finger motif lies at 305 to 330 (IKCEVEGCSSTFSKASNLQKHMKAVH). The C2H2-type 9; degenerate zinc-finger motif lies at 336–362 (FVCGFPGCGMRFAYKHVRNKHENSGYH). The Nuclear localization signal motif lies at 384–391 (LKRKQVTA).

Post-translationally, protein product TFIIIA (44 kDa) is proteolytically cleaved into TFIIIA-C (34 kDa). As to expression, expressed in seedlings, flowers, siliques and seeds.

It localises to the nucleus. It is found in the nucleolus. Functionally, essential protein. Isoform 1 is a transcription activator the binds both 5S rDNA and 5S rRNA and stimulates the transcription of 5S rRNA gene. Isoform 1 regulates 5S rRNA levels during development. This is Transcription factor IIIA from Arabidopsis thaliana (Mouse-ear cress).